Here is a 227-residue protein sequence, read N- to C-terminus: MAQYHGTHSIMQSKCFESFAYFQIWLANIEDSRCDGGYLGSSQGPSYEDEYYLLCRRRPSTTTKRRRMSDDCASNELNSSIVACTAFVHVFETMDGRVTVRYCLDHCGHPVEVDDHHRRETKKFENRLTLKRSSPCATYELCDESCDCEQSSSSMASSPSSSVDFEDEDASNNNYKLQESIDAYAVSSLNAIINQRLDSTADRLKTLTKVLQELAVDIRNTDCRMVI.

This is an uncharacterized protein from Caenorhabditis elegans.